Reading from the N-terminus, the 422-residue chain is Protein FAM53B (422 aa).

Ser-118, Ser-167, Ser-169, Ser-179, Ser-212, and Ser-268 each carry phosphoserine. A compositionally biased stretch (low complexity) spans 245 to 268 (SANSTPASTPELARRSSGLSRSRS). A disordered region spans residues 245–269 (SANSTPASTPELARRSSGLSRSRSQ). A Nuclear localization signal motif is present at residues 281-284 (KRRR).

It belongs to the FAM53 family. In terms of assembly, interacts with CTNNB1. As to expression, detected in skeletal muscle, kidney, spleen, thyroid, testis, ovary, small intestine, colon and peripheral blood.

Its subcellular location is the nucleus. Acts as a regulator of Wnt signaling pathway by regulating beta-catenin (CTNNB1) nuclear localization. The chain is Protein FAM53B from Homo sapiens (Human).